The primary structure comprises 120 residues: NAD(P)H-quinone oxidoreductase subunit 3, chloroplastic (120 aa).

A run of 3 helical transmembrane segments spans residues 9 to 29 (IFWT…SISG), 64 to 84 (MFAL…PWAM), and 88 to 108 (VLGV…VVGL).

The protein belongs to the complex I subunit 3 family. NDH is composed of at least 16 different subunits, 5 of which are encoded in the nucleus.

It is found in the plastid. The protein localises to the chloroplast thylakoid membrane. The enzyme catalyses a plastoquinone + NADH + (n+1) H(+)(in) = a plastoquinol + NAD(+) + n H(+)(out). It catalyses the reaction a plastoquinone + NADPH + (n+1) H(+)(in) = a plastoquinol + NADP(+) + n H(+)(out). In terms of biological role, NDH shuttles electrons from NAD(P)H:plastoquinone, via FMN and iron-sulfur (Fe-S) centers, to quinones in the photosynthetic chain and possibly in a chloroplast respiratory chain. The immediate electron acceptor for the enzyme in this species is believed to be plastoquinone. Couples the redox reaction to proton translocation, and thus conserves the redox energy in a proton gradient. This is NAD(P)H-quinone oxidoreductase subunit 3, chloroplastic from Hordeum vulgare (Barley).